The chain runs to 317 residues: Acetyl-coenzyme A carboxylase carboxyl transferase subunit beta (317 aa).

The interval 1 to 28 (MANNMTDTMTKPDINNDSTSLQQNGNKA) is disordered. Positions 55–317 (PSTKCSSCHS…LCSVPNVDVQ (263 aa)) constitute a CoA carboxyltransferase N-terminal domain. Residues Cys59, Cys62, Cys78, and Cys81 each coordinate Zn(2+). The C4-type zinc-finger motif lies at 59 to 81 (CSSCHSIITNTALIFNCYVCPHC).

It belongs to the AccD/PCCB family. As to quaternary structure, acetyl-CoA carboxylase is a heterohexamer composed of biotin carboxyl carrier protein (AccB), biotin carboxylase (AccC) and two subunits each of ACCase subunit alpha (AccA) and ACCase subunit beta (AccD). Requires Zn(2+) as cofactor.

The protein localises to the cytoplasm. The enzyme catalyses N(6)-carboxybiotinyl-L-lysyl-[protein] + acetyl-CoA = N(6)-biotinyl-L-lysyl-[protein] + malonyl-CoA. The protein operates within lipid metabolism; malonyl-CoA biosynthesis; malonyl-CoA from acetyl-CoA: step 1/1. Functionally, component of the acetyl coenzyme A carboxylase (ACC) complex. Biotin carboxylase (BC) catalyzes the carboxylation of biotin on its carrier protein (BCCP) and then the CO(2) group is transferred by the transcarboxylase to acetyl-CoA to form malonyl-CoA. The protein is Acetyl-coenzyme A carboxylase carboxyl transferase subunit beta of Psychrobacter cryohalolentis (strain ATCC BAA-1226 / DSM 17306 / VKM B-2378 / K5).